A 413-amino-acid chain; its full sequence is NAD(P)H oxidoreductase RTN4IP1, mitochondrial (413 aa).

Residues 1–23 (MTAAGFNSILCLRQLVRLNRRQY) constitute a mitochondrion transit peptide. Residues 27 to 52 (AKSVLSGSQTNDQATPPPTSKSADKM) form a disordered region. A compositionally biased stretch (polar residues) spans 31-40 (LSGSQTNDQA). The Enoyl reductase (ER) domain occupies 61–405 (GDIDELQLSE…SGHLRGKIVV (345 aa)). Residues Ser-228, Gly-230, Val-231, Ser-251, Tyr-269, Gly-353, Phe-355, His-398, and Arg-400 each coordinate NADPH.

It belongs to the zinc-containing alcohol dehydrogenase family. Quinone oxidoreductase subfamily.

The protein localises to the mitochondrion matrix. The catalysed reaction is a quinone + NADH + H(+) = a quinol + NAD(+). The enzyme catalyses a quinone + NADPH + H(+) = a quinol + NADP(+). It functions in the pathway cofactor biosynthesis; ubiquinone biosynthesis. Its function is as follows. NAD(P)H oxidoreductase. Involved in the ubiquinone biosynthetic pathway. This Drosophila melanogaster (Fruit fly) protein is NAD(P)H oxidoreductase RTN4IP1, mitochondrial.